A 320-amino-acid polypeptide reads, in one-letter code: 4-hydroxyproline 2-epimerase (320 aa).

Cys98 (proton acceptor) is an active-site residue. Substrate-binding positions include 99-100, His218, and Asp242; that span reads GH. The active-site Proton donor is Cys246. 247–248 lines the substrate pocket; the sequence is GT.

The protein belongs to the proline racemase family.

It catalyses the reaction trans-4-hydroxy-L-proline = cis-4-hydroxy-D-proline. Functionally, catalyzes the epimerization of trans-4-hydroxy-L-proline (t4LHyp) to cis-4-hydroxy-D-proline (c4DHyp). Is likely involved in a degradation pathway that converts t4LHyp to alpha-ketoglutarate. Displays no proline racemase activity. This Burkholderia pseudomallei (strain 1710b) protein is 4-hydroxyproline 2-epimerase.